Reading from the N-terminus, the 275-residue chain is 4-hydroxy-3-methylbut-2-enyl diphosphate reductase (275 aa).

Position 12 (Cys12) interacts with [4Fe-4S] cluster. His40 and His70 together coordinate (2E)-4-hydroxy-3-methylbut-2-enyl diphosphate. Dimethylallyl diphosphate-binding residues include His40 and His70. The isopentenyl diphosphate site is built by His40 and His70. [4Fe-4S] cluster is bound at residue Cys92. His119 is a binding site for (2E)-4-hydroxy-3-methylbut-2-enyl diphosphate. Dimethylallyl diphosphate is bound at residue His119. His119 is a binding site for isopentenyl diphosphate. Residue Glu121 is the Proton donor of the active site. Position 151 (Thr151) interacts with (2E)-4-hydroxy-3-methylbut-2-enyl diphosphate. Cys181 serves as a coordination point for [4Fe-4S] cluster. The (2E)-4-hydroxy-3-methylbut-2-enyl diphosphate site is built by Ser209, Ser210, Asn211, and Ser251. Ser209, Ser210, Asn211, and Ser251 together coordinate dimethylallyl diphosphate. The isopentenyl diphosphate site is built by Ser209, Ser210, Asn211, and Ser251.

This sequence belongs to the IspH family. The cofactor is [4Fe-4S] cluster.

The enzyme catalyses isopentenyl diphosphate + 2 oxidized [2Fe-2S]-[ferredoxin] + H2O = (2E)-4-hydroxy-3-methylbut-2-enyl diphosphate + 2 reduced [2Fe-2S]-[ferredoxin] + 2 H(+). The catalysed reaction is dimethylallyl diphosphate + 2 oxidized [2Fe-2S]-[ferredoxin] + H2O = (2E)-4-hydroxy-3-methylbut-2-enyl diphosphate + 2 reduced [2Fe-2S]-[ferredoxin] + 2 H(+). It functions in the pathway isoprenoid biosynthesis; dimethylallyl diphosphate biosynthesis; dimethylallyl diphosphate from (2E)-4-hydroxy-3-methylbutenyl diphosphate: step 1/1. It participates in isoprenoid biosynthesis; isopentenyl diphosphate biosynthesis via DXP pathway; isopentenyl diphosphate from 1-deoxy-D-xylulose 5-phosphate: step 6/6. Catalyzes the conversion of 1-hydroxy-2-methyl-2-(E)-butenyl 4-diphosphate (HMBPP) into a mixture of isopentenyl diphosphate (IPP) and dimethylallyl diphosphate (DMAPP). Acts in the terminal step of the DOXP/MEP pathway for isoprenoid precursor biosynthesis. In Thermotoga petrophila (strain ATCC BAA-488 / DSM 13995 / JCM 10881 / RKU-1), this protein is 4-hydroxy-3-methylbut-2-enyl diphosphate reductase.